The chain runs to 1297 residues: DNA-directed RNA polymerase subunit beta'' (1297 aa).

Residues Cys220, Cys293, Cys300, and Cys303 each coordinate Zn(2+). Over residues 1278–1288 (RRRKQNTKTRK) the composition is skewed to basic residues. A disordered region spans residues 1278–1297 (RRRKQNTKTRKNNLFSLNEK).

Belongs to the RNA polymerase beta' chain family. RpoC2 subfamily. In terms of assembly, in plastids the minimal PEP RNA polymerase catalytic core is composed of four subunits: alpha, beta, beta', and beta''. When a (nuclear-encoded) sigma factor is associated with the core the holoenzyme is formed, which can initiate transcription. The cofactor is Zn(2+).

The protein localises to the plastid. It is found in the chloroplast. The catalysed reaction is RNA(n) + a ribonucleoside 5'-triphosphate = RNA(n+1) + diphosphate. Functionally, DNA-dependent RNA polymerase catalyzes the transcription of DNA into RNA using the four ribonucleoside triphosphates as substrates. In Welwitschia mirabilis (Tree tumbo), this protein is DNA-directed RNA polymerase subunit beta''.